Reading from the N-terminus, the 197-residue chain is Small ribosomal subunit protein uS5 (197 aa).

The span at 1-17 shows a compositional bias: basic and acidic residues; that stretch reads MAERENRGRGRGRNREE. Disordered regions lie at residues 1-22 and 158-197; these read MAERENRGRGRGRNREEETPEF and NESSPRQVASRRGKKVADILPKRDDHPQIDGEQAPVSEEA. Residues 22 to 85 enclose the S5 DRBM domain; the sequence is FADRLVAINR…EQAKRQLIRV (64 aa). The span at 172 to 186 shows a compositional bias: basic and acidic residues; sequence KVADILPKRDDHPQI.

It belongs to the universal ribosomal protein uS5 family. In terms of assembly, part of the 30S ribosomal subunit. Contacts proteins S4 and S8.

Functionally, with S4 and S12 plays an important role in translational accuracy. Its function is as follows. Located at the back of the 30S subunit body where it stabilizes the conformation of the head with respect to the body. This is Small ribosomal subunit protein uS5 from Jannaschia sp. (strain CCS1).